Reading from the N-terminus, the 556-residue chain is Urocanate hydratase (556 aa).

Residues 52–53, glutamine 130, 176–178, glutamate 196, arginine 201, 242–243, 263–267, 273–274, and tyrosine 322 each bind NAD(+); these read GG, GMG, NA, QTSAH, and YL. Residue cysteine 410 is part of the active site. Position 492 (glycine 492) interacts with NAD(+).

The protein belongs to the urocanase family. It depends on NAD(+) as a cofactor.

The protein resides in the cytoplasm. It carries out the reaction 4-imidazolone-5-propanoate = trans-urocanate + H2O. It participates in amino-acid degradation; L-histidine degradation into L-glutamate; N-formimidoyl-L-glutamate from L-histidine: step 2/3. Its function is as follows. Catalyzes the conversion of urocanate to 4-imidazolone-5-propionate. The chain is Urocanate hydratase from Shewanella sediminis (strain HAW-EB3).